The primary structure comprises 105 residues: UPF0145 protein VP1283 (105 aa).

Belongs to the UPF0145 family.

The sequence is that of UPF0145 protein VP1283 from Vibrio parahaemolyticus serotype O3:K6 (strain RIMD 2210633).